Reading from the N-terminus, the 352-residue chain is tRNA pseudouridine synthase D (352 aa).

Aspartate 81 functions as the Nucleophile in the catalytic mechanism. In terms of domain architecture, TRUD spans 157-303 (GVPNYFGAQR…MDHERRILRL (147 aa)).

The protein belongs to the pseudouridine synthase TruD family.

The catalysed reaction is uridine(13) in tRNA = pseudouridine(13) in tRNA. Its function is as follows. Responsible for synthesis of pseudouridine from uracil-13 in transfer RNAs. This is tRNA pseudouridine synthase D from Pseudomonas entomophila (strain L48).